Reading from the N-terminus, the 59-residue chain is Single-pass membrane and coiled-coil domain-containing protein 4 (59 aa).

Residues 1–23 (MRQLKGKPKKETSKDKRERKQAM) are disordered. The segment covering 9 to 23 (KKETSKDKRERKQAM) has biased composition (basic and acidic residues). Residues 9–30 (KKETSKDKRERKQAMQDARKQV) are a coiled coil. A helical transmembrane segment spans residues 32 to 52 (TVVLPTVAVVVLLIVFFVYAA).

Belongs to the SMCO4 family.

It localises to the membrane. This chain is Single-pass membrane and coiled-coil domain-containing protein 4 (smco4), found in Takifugu rubripes (Japanese pufferfish).